Reading from the N-terminus, the 34-residue chain is Photosystem II reaction center protein Psb30 (34 aa).

A helical transmembrane segment spans residues 6-26 (VIGQLIATGAIMLAGPAVIVL).

Belongs to the Psb30/Ycf12 family. PSII is composed of 1 copy each of membrane proteins PsbA, PsbB, PsbC, PsbD, PsbE, PsbF, PsbH, PsbI, PsbJ, PsbK, PsbL, PsbM, PsbT, PsbX, PsbY, PsbZ, Psb30/Ycf12, peripheral proteins of the oxygen-evolving complex and a large number of cofactors. It forms dimeric complexes.

Its subcellular location is the plastid. It is found in the chloroplast thylakoid membrane. Its function is as follows. A core subunit of photosystem II (PSII), probably helps stabilize the reaction center. This is Photosystem II reaction center protein Psb30 from Trieres chinensis (Marine centric diatom).